The sequence spans 431 residues: Histidinol dehydrogenase (431 aa).

NAD(+)-binding residues include tyrosine 130, glutamine 191, and asparagine 214. Substrate is bound by residues serine 237, glutamine 259, and histidine 262. Residues glutamine 259 and histidine 262 each contribute to the Zn(2+) site. Residues glutamate 327 and histidine 328 each act as proton acceptor in the active site. Positions 328, 361, 415, and 420 each coordinate substrate. A Zn(2+)-binding site is contributed by aspartate 361. Residue histidine 420 participates in Zn(2+) binding.

It belongs to the histidinol dehydrogenase family. Zn(2+) serves as cofactor.

The enzyme catalyses L-histidinol + 2 NAD(+) + H2O = L-histidine + 2 NADH + 3 H(+). Its pathway is amino-acid biosynthesis; L-histidine biosynthesis; L-histidine from 5-phospho-alpha-D-ribose 1-diphosphate: step 9/9. Functionally, catalyzes the sequential NAD-dependent oxidations of L-histidinol to L-histidinaldehyde and then to L-histidine. The polypeptide is Histidinol dehydrogenase (Rhodopseudomonas palustris (strain ATCC BAA-98 / CGA009)).